A 106-amino-acid chain; its full sequence is MAEIRKGDTVKVIAGKEKGKSGRVLEVLREDGRVRVEKLMTVKRHQKKGRSQANPEGGILEMAGTIAISSVMVVGKDEKPVRREKIGRELGAKEKARLQKRKTAAK.

The segment covering 84–97 has biased composition (basic and acidic residues); the sequence is EKIGRELGAKEKAR. The segment at 84–106 is disordered; it reads EKIGRELGAKEKARLQKRKTAAK.

It belongs to the universal ribosomal protein uL24 family. Part of the 50S ribosomal subunit.

In terms of biological role, one of two assembly initiator proteins, it binds directly to the 5'-end of the 23S rRNA, where it nucleates assembly of the 50S subunit. Its function is as follows. One of the proteins that surrounds the polypeptide exit tunnel on the outside of the subunit. This is Large ribosomal subunit protein uL24 from Anaeromyxobacter dehalogenans (strain 2CP-1 / ATCC BAA-258).